Here is a 397-residue protein sequence, read N- to C-terminus: Galactokinase (397 aa).

The disordered stretch occupies residues 1-27 (MGEAVGEPSASGSGSCTGRSRRGCGRR). Residues 9 to 18 (SASGSGSCTG) are compositionally biased toward low complexity. 36-39 (EHTD) serves as a coordination point for substrate. Residues Ser-69 and 124 to 130 (GAGLSSS) contribute to the ATP site. Residues Ser-130 and Glu-161 each contribute to the Mg(2+) site. Asp-173 acts as the Proton acceptor in catalysis. Tyr-225 is a substrate binding site.

This sequence belongs to the GHMP kinase family. GalK subfamily.

The protein localises to the cytoplasm. It carries out the reaction alpha-D-galactose + ATP = alpha-D-galactose 1-phosphate + ADP + H(+). It participates in carbohydrate metabolism; galactose metabolism. In terms of biological role, catalyzes the transfer of the gamma-phosphate of ATP to D-galactose to form alpha-D-galactose-1-phosphate (Gal-1-P). This chain is Galactokinase, found in Streptomyces lividans.